Consider the following 785-residue polypeptide: Peptide transporter family 2 (785 aa).

Transmembrane regions (helical) follow at residues 46 to 66, 72 to 92, 99 to 119, 134 to 154, 167 to 187, 208 to 228, 303 to 323, 345 to 365, and 382 to 402; these read FSFY…LNFS, VLFH…SILA, FWTI…LAFS, LLGL…VSAF, ISLF…ISMW, FGIP…GSFW, VIVM…QGST, MGVL…SIVY, and AGGG…QLFV. N467 carries an N-linked (GlcNAc...) asparagine glycan. A run of 3 helical transmembrane segments spans residues 670–690, 711–731, and 738–758; these read ILWQ…FSIT, WLFT…LNIF, and MFVF…LAVF.

Belongs to the major facilitator superfamily. Proton-dependent oligopeptide transporter (POT/PTR) (TC 2.A.17) family. Expressed in vulval, pharyngeal and anal muscles.

It is found in the membrane. Proton-dependent uptake of di- or tripeptides, and to a minor extent tetrapeptides. Transport is independent of sodium and chloride ions. Protein shows high affinity to peptide substrates. In Caenorhabditis elegans, this protein is Peptide transporter family 2 (pept-2).